A 131-amino-acid chain; its full sequence is Type 3 secretion system pilotin (131 aa).

An N-terminal signal peptide occupies residues 1–15; it reads MSRIIALIISFLLVG. Cys16 is lipidated: N-palmitoyl cysteine. The S-diacylglycerol cysteine moiety is linked to residue Cys16.

It belongs to the ExsB/YscW family. In terms of assembly, interacts with YscC/SctC.

The protein localises to the cell outer membrane. Involved in the synthesis of the type III secretion system (T3SS), also called injectisome, which is used to inject bacterial effector proteins into eukaryotic host cells. Pilot protein that is required for the proper localization of the secretin YscC/SctC in the outer membrane. Also required for efficient oligomerization of YscC/SctC and stabilization of the oligomers. The polypeptide is Type 3 secretion system pilotin (Yersinia enterocolitica).